A 276-amino-acid polypeptide reads, in one-letter code: Small ribosomal subunit protein uS2 (276 aa).

The tract at residues 226–276 (KKAREERQLAAAREAAGEPKSEDAPAEAAATEEAPATEAPAAEAQQENAAE) is disordered. The segment covering 251 to 276 (AEAAATEEAPATEAPAAEAQQENAAE) has biased composition (low complexity).

This sequence belongs to the universal ribosomal protein uS2 family.

This is Small ribosomal subunit protein uS2 from Corynebacterium efficiens (strain DSM 44549 / YS-314 / AJ 12310 / JCM 11189 / NBRC 100395).